Here is a 2773-residue protein sequence, read N- to C-terminus: Peramine synthetase A (2773 aa).

The tract at residues 246–644 (FEDQVYSQPL…GRKDAQVKIR (399 aa)) is adenylation 1. Positions 774 to 850 (QPTCEMEERM…DLAKNCSQTL (77 aa)) constitute a Carrier 1 domain. Ser-811 carries the post-translational modification O-(pantetheine 4'-phosphoryl)serine. The interval 888-1301 (QDAYPCTRLQ…MSSAEDLEQI (414 aa)) is condensation. Residues 1321-1720 (ADQVQARPDS…GRKDTQVKVR (400 aa)) are adenylation 2. Residues 1810–1949 (IGRDFVGWSS…IIQHLASLGS (140 aa)) are methylation (Met) domain. Residues 2250–2271 (MLSESLQQKAPPTARKRLPSTA) are disordered. The Carrier 2 domain occupies 2267 to 2345 (LPSTAPERAM…HLLQTAAAGV (79 aa)). Ser-2304 bears the O-(pantetheine 4'-phosphoryl)serine mark. Residues 2397–2715 (TVVLTGANGF…LQDLADTARS (319 aa)) form a thiesterase (TE) domain region.

The protein belongs to the NRP synthetase family. It depends on pantetheine 4'-phosphate as a cofactor.

The catalysed reaction is (S)-1-pyrroline-5-carboxylate + L-arginine + S-adenosyl-L-methionine + 2 ATP = peramine + 2 AMP + S-adenosyl-L-homocysteine + 2 diphosphate + H2O + 2 H(+). In terms of biological role, nonribosomal peptide synthetase involved in the biosynthesis of peramine, a pyrrolopyrazine synthesized in association with the grass host that protects the plant from insect herbivory. The single multifunctional NRPS perA seems to be responsible for all catalytic steps in the biosynthesis of peramine. The condensation domain of perA is proposed to catalyze formation of a peptide bond between 1-pyrroline-5-carboxylate and arginine. The methylation domain of perA would catalyze the N-methylation of the alpha-amino group of arginine. The reductase domain is proposed to be responsible for reduction of the thioester and the cyclization to form an iminium ion resulting in release from the peptide synthetase. Deprotonation of this intermediate and oxidation of the pyrroline ring would give rise to peramine. This final oxidation to give the pyrrole functionality may be spontaneous. This chain is Peramine synthetase A, found in Epichloe festucae (strain Fl1).